The primary structure comprises 117 residues: Large ribosomal subunit protein bL20 (117 aa).

The protein belongs to the bacterial ribosomal protein bL20 family.

Its function is as follows. Binds directly to 23S ribosomal RNA and is necessary for the in vitro assembly process of the 50S ribosomal subunit. It is not involved in the protein synthesizing functions of that subunit. This Pelobacter propionicus (strain DSM 2379 / NBRC 103807 / OttBd1) protein is Large ribosomal subunit protein bL20.